We begin with the raw amino-acid sequence, 1862 residues long: Chitin synthase V (1862 aa).

The tract at residues 1–26 (MAMSLPQLGGAGGPHTQPSLPSLPAH) is disordered. The region spanning 1–778 (MAMSLPQLGG…CWMEIAQLGE (778 aa)) is the Myosin motor domain. A glycan (N-linked (GlcNAc...) asparagine) is linked at asparagine 63. 104–111 (GESGAGKS) contributes to the ATP binding site. Asparagine 123, asparagine 429, asparagine 483, asparagine 522, and asparagine 560 each carry an N-linked (GlcNAc...) asparagine glycan. The tract at residues 592–643 (TVSSKPMRAPSVMSRKTHRTGRPSTAYKRQQQEAMEELDQQSQAGESKKNAK) is disordered. Positions 658–682 (LDNVQKAVTDPGTNSYFVFCLKPND) are actin-binding. 2 helical membrane-spanning segments follow: residues 884 to 904 (WVAL…RLIG) and 923 to 943 (MLIW…PMLI). The region spanning 947-1009 (QYVYSSNELS…YAGKDISALF (63 aa)) is the Cytochrome b5 heme-binding domain. Residues asparagine 1036, asparagine 1063, and asparagine 1192 are each glycosylated (N-linked (GlcNAc...) asparagine). The helical transmembrane segment at 1202–1222 (FILAISVMLASILVFKFLAAL) threads the bilayer. 2 N-linked (GlcNAc...) asparagine glycosylation sites follow: asparagine 1459 and asparagine 1565. A run of 3 helical transmembrane segments spans residues 1590–1610 (FVVF…MYIV), 1623–1643 (VPIT…VIFI), and 1650–1670 (MVGW…GLPL). Asparagine 1771 is a glycosylation site (N-linked (GlcNAc...) asparagine). The region spanning 1804 to 1859 (MPSDDALLAEIRDILKTADLMTVTKKGIKQELERRFNVPLDAKRAYINSATEALLS) is the DEK-C domain.

This sequence in the N-terminal section; belongs to the TRAFAC class myosin-kinesin ATPase superfamily. Myosin family. It in the C-terminal section; belongs to the chitin synthase family. Class V subfamily.

The protein resides in the cell membrane. It catalyses the reaction [(1-&gt;4)-N-acetyl-beta-D-glucosaminyl](n) + UDP-N-acetyl-alpha-D-glucosamine = [(1-&gt;4)-N-acetyl-beta-D-glucosaminyl](n+1) + UDP + H(+). Polymerizes chitin, a structural polymer of the cell wall and septum, by transferring the sugar moiety of UDP-GlcNAc to the non-reducing end of the growing chitin polymer. ChsV and chsVb do perform additive, but not redundant, functions in septum formation. Involved in cell wall integrity and resistance to antimicrobial plant defense compounds such as the tomato phytoanticipin alpha-tomatine or H(2)O(2), and plays a crucial role in vascular colonization and pathogenicity. Also plays an important role in nuclear sorting or distribution. The polypeptide is Chitin synthase V (Fusarium oxysporum f. sp. lycopersici (strain 4287 / CBS 123668 / FGSC 9935 / NRRL 34936) (Fusarium vascular wilt of tomato)).